The following is a 134-amino-acid chain: Parvalbumin-like EF-hand-containing protein (134 aa).

EF-hand domains are found at residues 55–90 (QLDD…IPSS) and 96–131 (LTDE…EKIP). D68, D70, S72, F74, E76, E79, D109, D113, and E120 together coordinate Ca(2+).

It belongs to the parvalbumin family.

The sequence is that of Parvalbumin-like EF-hand-containing protein from Homo sapiens (Human).